Reading from the N-terminus, the 212-residue chain is Ribonuclease HII (212 aa).

Positions Gly18–Arg212 constitute an RNase H type-2 domain. A divalent metal cation contacts are provided by Asp24, Glu25, and Asp118.

It belongs to the RNase HII family. Requires Mn(2+) as cofactor. Mg(2+) serves as cofactor.

The protein resides in the cytoplasm. It carries out the reaction Endonucleolytic cleavage to 5'-phosphomonoester.. Functionally, endonuclease that specifically degrades the RNA of RNA-DNA hybrids. The protein is Ribonuclease HII of Erythrobacter litoralis (strain HTCC2594).